The sequence spans 281 residues: Probable endonuclease 4 (281 aa).

Zn(2+)-binding residues include His69, His109, Glu145, Asp179, His182, His216, Asp229, His231, and Glu261.

It belongs to the AP endonuclease 2 family. Requires Zn(2+) as cofactor.

The catalysed reaction is Endonucleolytic cleavage to 5'-phosphooligonucleotide end-products.. Functionally, endonuclease IV plays a role in DNA repair. It cleaves phosphodiester bonds at apurinic or apyrimidinic (AP) sites, generating a 3'-hydroxyl group and a 5'-terminal sugar phosphate. In Buchnera aphidicola subsp. Acyrthosiphon pisum (strain APS) (Acyrthosiphon pisum symbiotic bacterium), this protein is Probable endonuclease 4.